We begin with the raw amino-acid sequence, 152 residues long: Transcriptional regulator MraZ (152 aa).

SpoVT-AbrB domains lie at 5-52 (ASAI…PIQE) and 81-124 (AHEC…DEAA).

The protein belongs to the MraZ family. Forms oligomers.

It localises to the cytoplasm. The protein localises to the nucleoid. The polypeptide is Transcriptional regulator MraZ (Shewanella halifaxensis (strain HAW-EB4)).